Here is a 293-residue protein sequence, read N- to C-terminus: NAD kinase (293 aa).

The active-site Proton acceptor is the Asp73. Residues 73–74 (DG), 147–148 (NE), His158, Arg175, Asp177, 188–193 (TAYSLS), and Gln248 contribute to the NAD(+) site.

It belongs to the NAD kinase family. A divalent metal cation serves as cofactor.

It localises to the cytoplasm. The enzyme catalyses NAD(+) + ATP = ADP + NADP(+) + H(+). Its function is as follows. Involved in the regulation of the intracellular balance of NAD and NADP, and is a key enzyme in the biosynthesis of NADP. Catalyzes specifically the phosphorylation on 2'-hydroxyl of the adenosine moiety of NAD to yield NADP. In Photobacterium profundum (strain SS9), this protein is NAD kinase.